Consider the following 387-residue polypeptide: Krueppel-like factor 17 (387 aa).

3 disordered regions span residues 28 to 54 (FLDMSSSPGSGGVHTSWNRGPSGIRRV), 213 to 234 (SRDPQDFAMPPAGSPSLLPLES), and 257 to 277 (RREAQNSRAQERASGRSSPVS). Residues 30–46 (DMSSSPGSGGVHTSWNR) are compositionally biased toward polar residues. Basic and acidic residues predominate over residues 257–270 (RREAQNSRAQERAS). 3 C2H2-type zinc fingers span residues 280–304 (YHCEYENCGKAYTKRSHLVSHQRKH), 310–334 (YKCTWEACTWSFFRSDELGRHTRIH), and 340–362 (HKCDQCGRQFMRSDHLRQHQRTH). Residues 357–387 (QHQRTHMRMPRSPDPQADSGRRAGPLPAPHL) form a disordered region.

The protein belongs to the Sp1 C2H2-type zinc-finger protein family.

It localises to the nucleus. Functionally, transcription repressor that binds to the promoter of target genes and prevents their expression. Acts as a negative regulator of epithelial-mesenchymal transition and metastasis in breast cancer. Specifically binds the 5'-CACCC-3' sequence in the promoter of ID1, a key metastasis regulator in breast cancer, and repress its expression. May be a germ cell-specific transcription factor that plays important roles in spermatid differentiation and oocyte development. This Sus scrofa (Pig) protein is Krueppel-like factor 17 (KLF17).